The primary structure comprises 293 residues: tRNA pseudouridine synthase B (293 aa).

The active-site Nucleophile is Asp-40.

This sequence belongs to the pseudouridine synthase TruB family. Type 1 subfamily.

The enzyme catalyses uridine(55) in tRNA = pseudouridine(55) in tRNA. In terms of biological role, responsible for synthesis of pseudouridine from uracil-55 in the psi GC loop of transfer RNAs. The polypeptide is tRNA pseudouridine synthase B (Rickettsia akari (strain Hartford)).